The chain runs to 520 residues: NAD(P)H-quinone oxidoreductase subunit 2 (520 aa).

The next 14 helical transmembrane spans lie at 26-46 (AVLPEAAVLMAMLGTLLVDLA), 54-74 (WSPPICYAGLGSALILLAMQW), 91-111 (LAIAFRGVIVLSTLISLLISW), 120-140 (PIGEFAAILLAATLGAMLLCG), 144-164 (LVSVFVSLETLSVASYLLSGY), 179-199 (LLVGSAAAAVFLYGASLLYGI), 220-240 (SALALVFVLSTVAFKIAAVPF), 252-272 (PTPVVAFLSVGSKAAGFALAI), 288-308 (LLFTVLAVLSMSLGNVVALAQ), 314-334 (MLAYSSIGQAGFVMIGLVCGT), 342-362 (VLYMAAYLFMNLGAFACIILF), 386-406 (LGLSLCLLSLGGIPPMLGFFG), 421-441 (LLVTVGLVTSVISIYYYISVI), and 474-494 (VALIFCVLVTAIGGIISNPLF).

This sequence belongs to the complex I subunit 2 family. NDH-1 can be composed of about 15 different subunits; different subcomplexes with different compositions have been identified which probably have different functions.

It localises to the cellular thylakoid membrane. It catalyses the reaction a plastoquinone + NADH + (n+1) H(+)(in) = a plastoquinol + NAD(+) + n H(+)(out). The enzyme catalyses a plastoquinone + NADPH + (n+1) H(+)(in) = a plastoquinol + NADP(+) + n H(+)(out). In terms of biological role, NDH-1 shuttles electrons from an unknown electron donor, via FMN and iron-sulfur (Fe-S) centers, to quinones in the respiratory and/or the photosynthetic chain. The immediate electron acceptor for the enzyme in this species is believed to be plastoquinone. Couples the redox reaction to proton translocation, and thus conserves the redox energy in a proton gradient. Cyanobacterial NDH-1 also plays a role in inorganic carbon-concentration. The chain is NAD(P)H-quinone oxidoreductase subunit 2 from Prochlorococcus marinus (strain NATL2A).